The following is a 361-amino-acid chain: Eukaryotic translation initiation factor 3 subunit F (361 aa).

2 stretches are compositionally biased toward low complexity: residues M1–T32 and A42–P73. The segment at M1 to P91 is disordered. A2 is subject to N-acetylalanine. Residue S52 is modified to Phosphoserine; by CDK11; in vitro. The span at A74–F90 shows a compositional bias: pro residues. Positions V96 to G226 constitute an MPN domain. K242 carries the N6-acetyllysine modification. S262 carries the post-translational modification Phosphoserine.

Belongs to the eIF-3 subunit F family. Component of the eukaryotic translation initiation factor 3 (eIF-3) complex, which is composed of 13 subunits: EIF3A, EIF3B, EIF3C, EIF3D, EIF3E, EIF3F, EIF3G, EIF3H, EIF3I, EIF3J, EIF3K, EIF3L and EIF3M. The eIF-3 complex appears to include 3 stable modules: module A is composed of EIF3A, EIF3B, EIF3G and EIF3I; module B is composed of EIF3F, EIF3H, and EIF3M; and module C is composed of EIF3C, EIF3D, EIF3E, EIF3K and EIF3L. EIF3C of module C binds EIF3B of module A and EIF3H of module B, thereby linking the three modules. EIF3J is a labile subunit that binds to the eIF-3 complex via EIF3B. The eIF-3 complex may interact with RPS6KB1 under conditions of nutrient depletion. Mitogenic stimulation may lead to binding and activation of a complex composed of MTOR and RPTOR, leading to phosphorylation and release of RPS6KB1 and binding of EIF4B to eIF-3. Interacts with RNF139; the interaction leads to protein translation inhibitions in a ubiquitination-dependent manner. Interacts with DTX1, the interaction is required for deubiquitinating activity towards NOTCH1. In terms of processing, phosphorylation is enhanced upon serum stimulation. Phosphorylated during apoptosis by caspase-processed CDK11.

The protein localises to the cytoplasm. The enzyme catalyses Thiol-dependent hydrolysis of ester, thioester, amide, peptide and isopeptide bonds formed by the C-terminal Gly of ubiquitin (a 76-residue protein attached to proteins as an intracellular targeting signal).. In terms of biological role, component of the eukaryotic translation initiation factor 3 (eIF-3) complex, which is required for several steps in the initiation of protein synthesis. The eIF-3 complex associates with the 40S ribosome and facilitates the recruitment of eIF-1, eIF-1A, eIF-2:GTP:methionyl-tRNAi and eIF-5 to form the 43S pre-initiation complex (43S PIC). The eIF-3 complex stimulates mRNA recruitment to the 43S PIC and scanning of the mRNA for AUG recognition. The eIF-3 complex is also required for disassembly and recycling of post-termination ribosomal complexes and subsequently prevents premature joining of the 40S and 60S ribosomal subunits prior to initiation. The eIF-3 complex specifically targets and initiates translation of a subset of mRNAs involved in cell proliferation, including cell cycling, differentiation and apoptosis, and uses different modes of RNA stem-loop binding to exert either translational activation or repression. Its function is as follows. Deubiquitinates activated NOTCH1, promoting its nuclear import, thereby acting as a positive regulator of Notch signaling. The polypeptide is Eukaryotic translation initiation factor 3 subunit F (Eif3f) (Mus musculus (Mouse)).